Consider the following 183-residue polypeptide: Small ribosomal subunit protein bS20c (183 aa).

Residues 1 to 68 constitute a chloroplast transit peptide; that stretch reads MAAISMACVS…FQRRGFSVVC (68 aa). The segment at 79-99 is disordered; the sequence is AAKRTRQAETRRLRNKARKSE.

Component of the chloroplast small ribosomal subunit (SSU). Mature 70S chloroplast ribosomes of higher plants consist of a small (30S) and a large (50S) subunit. The 30S small subunit contains 1 molecule of ribosomal RNA (16S rRNA) and 24 different proteins. The 50S large subunit contains 3 rRNA molecules (23S, 5S and 4.5S rRNA) and 33 different proteins.

The protein resides in the plastid. Its subcellular location is the chloroplast. Its function is as follows. Component of the chloroplast ribosome (chloro-ribosome), a dedicated translation machinery responsible for the synthesis of chloroplast genome-encoded proteins, including proteins of the transcription and translation machinery and components of the photosynthetic apparatus. This Spinacia oleracea (Spinach) protein is Small ribosomal subunit protein bS20c (RPS20).